Consider the following 185-residue polypeptide: MIPELKKTTEQKMQKSIDVLKADLAKVRTGRAHTGLLDHVMVEYYGSMVPISQVSNVTLIDARTIGVQVWEKPMMQKVERAIRDSDLGLNPANQGDIIRVPMPALTEERRRDLTKVVRHEGEAAKVAIRNLRRDANQHLKDAVKDKTISEDDDRRAQEDIQKLTDRNIAEIDKLLAQKEQELMQL.

The protein belongs to the RRF family.

The protein resides in the cytoplasm. Responsible for the release of ribosomes from messenger RNA at the termination of protein biosynthesis. May increase the efficiency of translation by recycling ribosomes from one round of translation to another. The polypeptide is Ribosome-recycling factor (Aromatoleum aromaticum (strain DSM 19018 / LMG 30748 / EbN1) (Azoarcus sp. (strain EbN1))).